A 219-amino-acid chain; its full sequence is Ras-like protein 1 (219 aa).

Residue 15–22 coordinates GTP; that stretch reads GDGGVGKS. Positions 37–45 match the Effector region motif; sequence YDPTIEDSY. Residues 62-66 and 121-124 contribute to the GTP site; these read DTAGQ and NKCD. C216 carries the post-translational modification Cysteine methyl ester. Residue C216 is the site of S-farnesyl cysteine attachment. Positions 217-219 are cleaved as a propeptide — removed in mature form; it reads VIC.

This sequence belongs to the small GTPase superfamily. Ras family. In terms of assembly, scd1, scd2, cdc42, and ras1, in its GTP-bound state, act cooperatively to form a protein complex. Post-translationally, palmitoylated by the erf2-erf4 complex.

It localises to the cell membrane. The catalysed reaction is GTP + H2O = GDP + phosphate + H(+). Alternates between an inactive form bound to GDP and an active form bound to GTP. Activated by a guanine nucleotide-exchange factor (GEF) and inactivated by a GTPase-activating protein (GAP). Functionally, participates in the process of sexual differentiation and the determination of cell shape. Essential for mating and for recognition of the mating pheromone, but not for vegetative growth. Does not regulate the intracellular cAMP level. Regulates two downstream pathways, namely the byr2/byr1/spk1 mitogen-activated protein kinase cascade and the cdc42 small G protein pathway. The former is relevant to mating and sporulation, whereas the latter is relevant to mating, cell growth and cell morphology. In Schizosaccharomyces pombe (strain 972 / ATCC 24843) (Fission yeast), this protein is Ras-like protein 1 (ras1).